We begin with the raw amino-acid sequence, 150 residues long: UPF0178 protein Sbal195_1808 (150 aa).

It belongs to the UPF0178 family.

This chain is UPF0178 protein Sbal195_1808, found in Shewanella baltica (strain OS195).